A 366-amino-acid chain; its full sequence is 2-aminoethylphosphonate--pyruvate transaminase (366 aa).

Lys192 carries the post-translational modification N6-(pyridoxal phosphate)lysine.

Belongs to the class-V pyridoxal-phosphate-dependent aminotransferase family. PhnW subfamily. As to quaternary structure, homodimer. Pyridoxal 5'-phosphate is required as a cofactor.

The enzyme catalyses (2-aminoethyl)phosphonate + pyruvate = phosphonoacetaldehyde + L-alanine. Involved in phosphonate degradation. This chain is 2-aminoethylphosphonate--pyruvate transaminase (phnW), found in Lysinibacillus sphaericus (strain C3-41).